The sequence spans 2149 residues: Polyketide synthase 1 (2149 aa).

An N-terminal acylcarrier protein transacylase domain (SAT) region spans residues 19-261; sequence FIFGDQSSCN…TRLAVHAPYH (243 aa). The Ketosynthase family 3 (KS3) domain maps to 394-829; sequence ESKIAIIGMS…GGNTALLVED (436 aa). Catalysis depends on for beta-ketoacyl synthase activity residues Cys-566, His-701, and His-745. Residues 929–1233 form a malonyl-CoA:ACP transacylase (MAT) domain region; that stretch reads AFVFSGQGSQ…PSLMRNKDGW (305 aa). Ser-1018 (for acyl/malonyl transferase activity) is an active-site residue. Positions 1310–1624 are product template (PT) domain; that stretch reads TASVHRIVHE…RKVLNTAMPP (315 aa). An N-terminal hotdog fold region spans residues 1314–1447; that stretch reads HRIVHESVDK…SSLHFERPKV (134 aa). The region spanning 1314–1619 is the PKS/mFAS DH domain; sequence HRIVHESVDK…FQGIPRKVLN (306 aa). His-1346 acts as the Proton acceptor; for dehydratase activity in catalysis. Residues 1474 to 1619 are C-terminal hotdog fold; sequence LNSRMSSGVI…FQGIPRKVLN (146 aa). Asp-1533 (proton donor; for dehydratase activity) is an active-site residue. A disordered region spans residues 1619–1657; it reads NTAMPPPKSQNEAPVRSAPAKPAAKPPKSASSEHSGHFA. Positions 1635–1650 are enriched in low complexity; the sequence is SAPAKPAAKPPKSASS. The 75-residue stretch at 1678–1752 folds into the Carrier 1 domain; the sequence is RNPMLAVFKI…DLATHLGLDT (75 aa). Ser-1712 carries the post-translational modification O-(pantetheine 4'-phosphoryl)serine. Residues 1755–1790 show a composition bias toward low complexity; sequence SDQSSGQSSSSGGLSPRSDSIGEITSSATTPPSLSP. A disordered region spans residues 1755–1796; that stretch reads SDQSSGQSSSSGGLSPRSDSIGEITSSATTPPSLSPRGSVSG. Positions 1793–1870 constitute a Carrier 2 domain; it reads SVSGSQCKDV…SFKHMFQQGH (78 aa). O-(pantetheine 4'-phosphoryl)serine is present on Ser-1830. Residues 1882–2147 form a thioesterase (TE) domain region; sequence LKQYRATSTL…ERVAAFIRST (266 aa). Catalysis depends on Ser-1973, which acts as the For thioesterase activity.

Polyketide synthase; part of the Pks1 gene cluster that mediates the biosynthesis of an anthraquinone derivative pigment that contributes to conidial pigmentation that provides protection from UV radiation, heat and cold stress. The polyketide synthase Pks1 produces 1-acetyl-2,4,6,8-tetrahydroxy-9,10-anthraquinone though condensation of acetyl-CoA with malonyl-CoA. The dehydratase EthD and the laccase Mlac1 further convert the anthraquinone derivative into the final conidial pigment. The chain is Polyketide synthase 1 from Metarhizium majus (strain ARSEF 297).